A 196-amino-acid chain; its full sequence is Guanylate kinase (196 aa).

The interval 1 to 24 (MPVESGAGNDQPKRLTVLSGPSGV) is disordered. One can recognise a Guanylate kinase-like domain in the interval 13–191 (KRLTVLSGPS…VCDELLALIA (179 aa)). 20–27 (GPSGVGKS) contributes to the ATP binding site.

Belongs to the guanylate kinase family.

It is found in the cytoplasm. It carries out the reaction GMP + ATP = GDP + ADP. Functionally, essential for recycling GMP and indirectly, cGMP. This chain is Guanylate kinase, found in Thermobifida fusca (strain YX).